A 522-amino-acid chain; its full sequence is Anti-sigma-I factor RsgI4 (522 aa).

At 1-51 (MNLGVVIKIKRKKAIIVTETGEFKAVNARNGMFLGQKILFDQQDVIENNRN) the chain is on the cytoplasmic side. A RsgI N-terminal anti-sigma domain is found at 2 to 49 (NLGVVIKIKRKKAIIVTETGEFKAVNARNGMFLGQKILFDQQDVIENN). A helical transmembrane segment spans residues 52–72 (GIGLAYSAAIAGMVAVFVFMF). Residues 73–522 (TYFGLHNFNG…SGILKWGREP (450 aa)) are Extracellular-facing. Positions 311 to 361 (SAKTPERATTVPVNTPVKPTDAPTKSPATATATATRAPVKATATPAKTLKP) are enriched in low complexity. The interval 311-371 (SAKTPERATT…SDTPVKTPDG (61 aa)) is disordered. The CBM3 domain occupies 371-522 (GEQSVKVRFY…SGILKWGREP (152 aa)).

Interacts (via RsgI N-terminal anti-sigma domain) with SigI4.

The protein localises to the cell membrane. Functionally, anti-sigma factor for SigI4. Negatively regulates SigI4 activity through direct interaction. Binding of the polysaccharide substrate to the extracellular C-terminal sensing domain of RsgI4 may induce a conformational change in its N-terminal cytoplasmic region, leading to the release and activation of SigI4. The protein is Anti-sigma-I factor RsgI4 of Acetivibrio thermocellus (strain ATCC 27405 / DSM 1237 / JCM 9322 / NBRC 103400 / NCIMB 10682 / NRRL B-4536 / VPI 7372) (Clostridium thermocellum).